A 337-amino-acid polypeptide reads, in one-letter code: Anthraniloyl-CoA anthraniloyltransferase (337 aa).

Residues Thr-29 and Phe-33 each coordinate anthraniloyl-CoA. Cys-113 acts as the Acyl-thioester intermediate in catalysis. Anthraniloyl-CoA is bound by residues 154–155 (RN), 221–224 (MRGR), and His-258.

The protein belongs to the thiolase-like superfamily. FabH family. Homodimer.

Its subcellular location is the cytoplasm. It catalyses the reaction anthraniloyl-CoA + malonyl-CoA + H(+) = (2-aminobenzoyl)acetyl-CoA + CO2 + CoA. Its function is as follows. Required for the biosynthesis of a number of signaling molecules, such as the quinolone signal 2-heptyl-3-hydroxy-4(1H)-quinolone (PQS), 2-heptyl-4-hydroxyquinoline (HHQ) and 2,4-dihydroxyquinoline (DHQ). These molecules are required for normal biofilm formation. Catalyzes the transfer of the anthraniloyl moiety from anthraniloyl-CoA to malonyl-CoA to form 2-aminobenzoylacetyl-CoA. The first step of the reaction is the formation of a covalent anthraniloyl-PqsD intermediate. Next, the short-lived intermediate 3-(2-aminophenyl)-3-oxopropanoyl-CoA is formed. An intramolecular rearrangement of this intermediate can give rise to 2,4-dihydroxyquinoline (DHQ). The protein is Anthraniloyl-CoA anthraniloyltransferase (pqsD) of Pseudomonas aeruginosa (strain ATCC 15692 / DSM 22644 / CIP 104116 / JCM 14847 / LMG 12228 / 1C / PRS 101 / PAO1).